Consider the following 87-residue polypeptide: Small ribosomal subunit protein bS16 (87 aa).

Belongs to the bacterial ribosomal protein bS16 family.

This is Small ribosomal subunit protein bS16 from Desulfatibacillum aliphaticivorans.